A 450-amino-acid polypeptide reads, in one-letter code: Chromosomal replication initiator protein DnaA (450 aa).

Residues 1–69 (MHDVWRQATE…VGALSVTAGK (69 aa)) are domain I, interacts with DnaA modulators. The tract at residues 69-113 (KKYFIELVVQEEDQNAEVPQAEDLIIKGHQEIEQPVTSQPETSSS) is domain II. The tract at residues 114–330 (SLNPKYTFEL…GMLIRLGAYS (217 aa)) is domain III, AAA+ region. Residues G158, G160, K161, and S162 each coordinate ATP. A domain IV, binds dsDNA region spans residues 331 to 450 (SLQGIPITLD…IEDIKLILLK (120 aa)).

Belongs to the DnaA family. Oligomerizes as a right-handed, spiral filament on DNA at oriC.

The protein resides in the cytoplasm. Plays an essential role in the initiation and regulation of chromosomal replication. ATP-DnaA binds to the origin of replication (oriC) to initiate formation of the DNA replication initiation complex once per cell cycle. Binds the DnaA box (a 9 base pair repeat at the origin) and separates the double-stranded (ds)DNA. Forms a right-handed helical filament on oriC DNA; dsDNA binds to the exterior of the filament while single-stranded (ss)DNA is stabiized in the filament's interior. The ATP-DnaA-oriC complex binds and stabilizes one strand of the AT-rich DNA unwinding element (DUE), permitting loading of DNA polymerase. After initiation quickly degrades to an ADP-DnaA complex that is not apt for DNA replication. Binds acidic phospholipids. The chain is Chromosomal replication initiator protein DnaA from Pelobacter propionicus (strain DSM 2379 / NBRC 103807 / OttBd1).